The primary structure comprises 288 residues: Pyridoxal kinase PdxY (288 aa).

Substrate contacts are provided by residues Ser12 and 47 to 48; that span reads TQ. Residues Asp114, Glu151, Lys184, and 211 to 214 contribute to the ATP site; that span reads RPLL. A substrate-binding site is contributed by Asp225.

It belongs to the pyridoxine kinase family. PdxY subfamily. Homodimer. The cofactor is Mg(2+).

It carries out the reaction pyridoxal + ATP = pyridoxal 5'-phosphate + ADP + H(+). It participates in cofactor metabolism; pyridoxal 5'-phosphate salvage; pyridoxal 5'-phosphate from pyridoxal: step 1/1. In terms of biological role, pyridoxal kinase involved in the salvage pathway of pyridoxal 5'-phosphate (PLP). Catalyzes the phosphorylation of pyridoxal to PLP. This chain is Pyridoxal kinase PdxY, found in Pseudomonas syringae pv. tomato (strain ATCC BAA-871 / DC3000).